The following is a 217-amino-acid chain: Adapter protein MecA (217 aa).

It belongs to the MecA family. As to quaternary structure, homodimer.

Functionally, enables the recognition and targeting of unfolded and aggregated proteins to the ClpC protease or to other proteins involved in proteolysis. This is Adapter protein MecA from Listeria welshimeri serovar 6b (strain ATCC 35897 / DSM 20650 / CCUG 15529 / CIP 8149 / NCTC 11857 / SLCC 5334 / V8).